A 264-amino-acid chain; its full sequence is MKQYLDLMKKVLEEGTPKADRTGTGTRSIFGHQMRFNLQDGFPLVTTKKCHLRSIIHELLWFLNGDTNVAYLNENKVSIWDEWADENGDLGPVYGKQWRSWGAADGRQIDQLKNVLTQLRQDPDSRRIIVSAWNVGELDKMALAPCHAFFQFYVADGKLSCQLYQRSCDIFLGLPFNIASYALLVHMVAQQCDLDVGDFVWTGGDTHLYNNHMEQTHLQLSREPRALPKLVIKRRPDTLFDYRFEDFEIEGYDPHPAIKAPVAI.

Arg21 contributes to the dUMP binding site. (6R)-5,10-methylene-5,6,7,8-tetrahydrofolate is bound at residue His51. 126-127 (RR) is a dUMP binding site. The active-site Nucleophile is Cys146. Residues 166–169 (RSCD), Asn177, and 207–209 (HLY) contribute to the dUMP site. Asp169 is a (6R)-5,10-methylene-5,6,7,8-tetrahydrofolate binding site. Residue Ala263 participates in (6R)-5,10-methylene-5,6,7,8-tetrahydrofolate binding.

It belongs to the thymidylate synthase family. Bacterial-type ThyA subfamily. Homodimer.

The protein localises to the cytoplasm. The catalysed reaction is dUMP + (6R)-5,10-methylene-5,6,7,8-tetrahydrofolate = 7,8-dihydrofolate + dTMP. It functions in the pathway pyrimidine metabolism; dTTP biosynthesis. Its function is as follows. Catalyzes the reductive methylation of 2'-deoxyuridine-5'-monophosphate (dUMP) to 2'-deoxythymidine-5'-monophosphate (dTMP) while utilizing 5,10-methylenetetrahydrofolate (mTHF) as the methyl donor and reductant in the reaction, yielding dihydrofolate (DHF) as a by-product. This enzymatic reaction provides an intracellular de novo source of dTMP, an essential precursor for DNA biosynthesis. The sequence is that of Thymidylate synthase from Pectobacterium atrosepticum (strain SCRI 1043 / ATCC BAA-672) (Erwinia carotovora subsp. atroseptica).